A 303-amino-acid polypeptide reads, in one-letter code: Signal recognition particle receptor FtsY (303 aa).

GTP contacts are provided by residues 108–115 (GVNGAGKT), 190–194 (DTAGR), and 254–257 (TKLD).

This sequence belongs to the GTP-binding SRP family. FtsY subfamily. As to quaternary structure, part of the signal recognition particle protein translocation system, which is composed of SRP and FtsY. SRP is a ribonucleoprotein composed of Ffh and a 4.5S RNA molecule.

It localises to the cell inner membrane. It is found in the cytoplasm. The enzyme catalyses GTP + H2O = GDP + phosphate + H(+). Its function is as follows. Involved in targeting and insertion of nascent membrane proteins into the cytoplasmic membrane. Acts as a receptor for the complex formed by the signal recognition particle (SRP) and the ribosome-nascent chain (RNC). Interaction with SRP-RNC leads to the transfer of the RNC complex to the Sec translocase for insertion into the membrane, the hydrolysis of GTP by both Ffh and FtsY, and the dissociation of the SRP-FtsY complex into the individual components. In Rickettsia bellii (strain RML369-C), this protein is Signal recognition particle receptor FtsY.